Consider the following 1029-residue polypeptide: Sodium/potassium-transporting ATPase subunit alpha-4 (1029 aa).

Residues 1-37 (MGLWGKKGTVAPHDQSPRRRPKKGLIKKKMVKREKQK) are disordered. Residues 1–95 (MGLWGKKGTV…NTVTPPPTTP (95 aa)) are Cytoplasmic-facing. Residues 18-36 (RRRPKKGLIKKKMVKREKQ) show a composition bias toward basic residues. An interaction with phosphoinositide-3 kinase region spans residues 90–92 (PPP). The chain crosses the membrane as a helical span at residues 96–116 (EWVKFCKQLFGGFSLLLWTGA). At 117 to 139 (ILCFVAYSIQIYFNEEPTKDNLY) the chain is on the extracellular side. The chain crosses the membrane as a helical span at residues 140-160 (LSIVLSVVVIVTGCFSYYQEA). The Cytoplasmic portion of the chain corresponds to 161–296 (KSSKIMESFK…VGQTPIAAEI (136 aa)). The span at 223-237 (NSSLTGESEPQSRSP) shows a compositional bias: polar residues. The disordered stretch occupies residues 223-242 (NSSLTGESEPQSRSPDFTHE). The helical transmembrane segment at 297 to 316 (EHFIHLITVVAVFLGVTFFA) threads the bilayer. Residues 317–328 (LSLLLGYGWLEA) lie on the Extracellular side of the membrane. The chain crosses the membrane as a helical span at residues 329–346 (IIFLIGIIVANVPEGLLA). Residues 347–778 (TVTVCLTLTA…EEGRLIFDNL (432 aa)) lie on the Cytoplasmic side of the membrane. Aspartate 384 functions as the 4-aspartylphosphate intermediate in the catalytic mechanism. The Mg(2+) site is built by aspartate 723 and aspartate 727. The helical transmembrane segment at 779-798 (KKSIMYTLTSNIPEITPFLM) threads the bilayer. Over 799–808 (FIILGIPLPL) the chain is Extracellular. A helical transmembrane segment spans residues 809-829 (GTITILCIDLGTDMVPAISLA). The Cytoplasmic segment spans residues 830–849 (YESAESDIMKRLPRNPKTDN). Residues 850–872 (LVNHRLIGMAYGQIGMIQALAGF) form a helical membrane-spanning segment. The Extracellular segment spans residues 873-924 (FTYFVILAENGFRPVDLLGIRLHWEDKYLNDLEDSYGQQWTYEQRKVVEFTC). A helical membrane pass occupies residues 925-944 (QTAFFVTIVVVQWADLIISK). Over 945–957 (TRRNSLFQQGMRN) the chain is Cytoplasmic. Serine 949 is modified (phosphoserine; by PKA). The chain crosses the membrane as a helical span at residues 958–976 (KVLIFGILEETLLAAFLSY). Residues 977 to 991 (TPGMDVALRMYPLKI) lie on the Extracellular side of the membrane. Residues 992–1012 (TWWLCAIPYSILIFVYDEIRK) traverse the membrane as a helical segment. The Cytoplasmic segment spans residues 1013-1029 (LLIRQHPDGWVERETYY).

This sequence belongs to the cation transport ATPase (P-type) (TC 3.A.3) family. Type IIC subfamily. The sodium/potassium-transporting ATPase is composed of a catalytic alpha subunit, an auxiliary non-catalytic beta subunit and an additional regulatory subunit. In terms of tissue distribution, specifically expressed in testis. Found in very low levels in skeletal muscle. Expressed in mature sperm (at protein level).

The protein resides in the cell membrane. The catalysed reaction is K(+)(out) + Na(+)(in) + ATP + H2O = K(+)(in) + Na(+)(out) + ADP + phosphate + H(+). Its activity is regulated as follows. Specifically inhibited by an endogenous cardiac glycoside, ouabain. This is the catalytic component of the active enzyme, which catalyzes the hydrolysis of ATP coupled with the exchange of sodium and potassium ions across the plasma membrane. This action creates the electrochemical gradient of sodium and potassium ions, providing the energy for active transport of various nutrients. Plays a role in sperm motility. This chain is Sodium/potassium-transporting ATPase subunit alpha-4, found in Homo sapiens (Human).